An 833-amino-acid polypeptide reads, in one-letter code: Leucine--tRNA ligase (833 aa).

The short motif at 41-52 (PYPSGAGLHVGH) is the 'HIGH' region element. Positions 610 to 614 (KMSKS) match the 'KMSKS' region motif. An ATP-binding site is contributed by K613.

The protein belongs to the class-I aminoacyl-tRNA synthetase family.

The protein localises to the cytoplasm. It carries out the reaction tRNA(Leu) + L-leucine + ATP = L-leucyl-tRNA(Leu) + AMP + diphosphate. The polypeptide is Leucine--tRNA ligase (Streptococcus pneumoniae (strain Taiwan19F-14)).